The primary structure comprises 160 residues: Ribosomal RNA large subunit methyltransferase H (160 aa).

S-adenosyl-L-methionine is bound by residues Leu76, Gly108, and 127–132 (FGRMTF).

Belongs to the RNA methyltransferase RlmH family. In terms of assembly, homodimer.

It localises to the cytoplasm. The catalysed reaction is pseudouridine(1915) in 23S rRNA + S-adenosyl-L-methionine = N(3)-methylpseudouridine(1915) in 23S rRNA + S-adenosyl-L-homocysteine + H(+). In terms of biological role, specifically methylates the pseudouridine at position 1915 (m3Psi1915) in 23S rRNA. The sequence is that of Ribosomal RNA large subunit methyltransferase H from Methylocella silvestris (strain DSM 15510 / CIP 108128 / LMG 27833 / NCIMB 13906 / BL2).